A 300-amino-acid chain; its full sequence is Recombination-promoting nuclease RpnC (300 aa).

This sequence belongs to the Rpn/YhgA-like nuclease family.

Functionally, a low activity DNA endonuclease yielding 3'-hydroxyl ends. Upon expression enhances RecA-independent DNA recombination 2.9-fold, concomitantly reducing viability by 59% and inducing DNA damage as measured by induction of the SOS repair response. In Escherichia coli (strain K12), this protein is Recombination-promoting nuclease RpnC.